We begin with the raw amino-acid sequence, 2183 residues long: COPII coat assembly protein SEC16 (2183 aa).

Disordered regions lie at residues 60–83 (TMAK…VAVP), 102–198 (SSTS…TVET), 247–278 (SKEE…TPSI), 358–608 (QADE…ITLS), 717–1071 (STPN…SEFK), 1541–1596 (TPGY…GYER), 1693–2044 (PPSA…KKVY), and 2066–2183 (GDLP…IMNN). Residues 64–75 (KNNKKSKAKAKK) are compositionally biased toward basic residues. Residues 102 to 134 (SSTSASLSVPESAAATETTASTSPTSPVTNVSP) are compositionally biased toward low complexity. A compositionally biased stretch (acidic residues) spans 149 to 175 (PDDEEDIDEEEETGTEESAEAEAEPES). Residues 259 to 278 (VATSTTTDVATPVATATPSI) are compositionally biased toward low complexity. Composition is skewed to basic and acidic residues over residues 358–369 (QADEYRKVRDQL), 387–405 (EEAK…HEDD), and 429–451 (PETK…KTEP). Residues 717 to 732 (STPNMYQPVSSQSTPS) are compositionally biased toward polar residues. A compositionally biased stretch (basic and acidic residues) spans 740–749 (KRVDKNKSDA). Low complexity predominate over residues 781 to 791 (PGLMPAFGAAP). Pro residues-rich tracts occupy residues 792–807 (GAPP…PPVA), 815–824 (APAPVQPPTT), and 906–916 (PYAPPSGPSAV). 2 stretches are compositionally biased toward low complexity: residues 990–1008 (VAAA…GTAS) and 1016–1043 (PRVS…VAPA). A compositionally biased stretch (low complexity) spans 1697–1714 (PSASGASPYAPSASSFSP). Over residues 1733-1746 (EEEETEAVDQEQEP) the composition is skewed to acidic residues. A compositionally biased stretch (basic and acidic residues) spans 1751–1766 (SHLENENERYEQKSEP). Over residues 1769–1785 (EPMAHPPPAQKAPPAAP) the composition is skewed to pro residues. Composition is skewed to low complexity over residues 1786 to 1804 (PAQQ…ARKV) and 1831 to 1846 (SAAA…SAYS). Acidic residues-rich tracts occupy residues 1890–1902 (AEEE…ETEV) and 1934–1943 (DAGDYGDDEG). Over residues 1957–1966 (SNLPPVPLPG) the composition is skewed to pro residues. A compositionally biased stretch (low complexity) spans 1969–1986 (PATSAAPPASRYSAPTAA). 2 stretches are compositionally biased toward basic and acidic residues: residues 2004 to 2022 (AKKE…DGGK) and 2031 to 2044 (KKGE…KKVY). Pro residues predominate over residues 2079-2104 (GPPPPPKAKKPAGPPAGGTPPPPSGG). Residues 2105–2117 (APPVGASRGATPP) are compositionally biased toward low complexity. Positions 2118-2130 (VATPPAADTPPVP) are enriched in pro residues. The span at 2135–2146 (APRPAATGAPRP) shows a compositional bias: low complexity.

The protein belongs to the SEC16 family.

The protein localises to the endoplasmic reticulum membrane. Functionally, involved in the initiation of assembly of the COPII coat required for the formation of transport vesicles from the endoplasmic reticulum (ER) and the selection of cargo molecules. Also involved in autophagy. The chain is COPII coat assembly protein SEC16 (SEC16) from Yarrowia lipolytica (strain CLIB 122 / E 150) (Yeast).